Reading from the N-terminus, the 159-residue chain is ATP synthase subunit b 2 (159 aa).

A helical transmembrane segment spans residues Met1 to Met21.

It belongs to the ATPase B chain family. F-type ATPases have 2 components, F(1) - the catalytic core - and F(0) - the membrane proton channel. F(1) has five subunits: alpha(3), beta(3), gamma(1), delta(1), epsilon(1). F(0) has three main subunits: a(1), b(2) and c(10-14). The alpha and beta chains form an alternating ring which encloses part of the gamma chain. F(1) is attached to F(0) by a central stalk formed by the gamma and epsilon chains, while a peripheral stalk is formed by the delta and b chains.

Its subcellular location is the cell inner membrane. F(1)F(0) ATP synthase produces ATP from ADP in the presence of a proton or sodium gradient. F-type ATPases consist of two structural domains, F(1) containing the extramembraneous catalytic core and F(0) containing the membrane proton channel, linked together by a central stalk and a peripheral stalk. During catalysis, ATP synthesis in the catalytic domain of F(1) is coupled via a rotary mechanism of the central stalk subunits to proton translocation. Functionally, component of the F(0) channel, it forms part of the peripheral stalk, linking F(1) to F(0). The polypeptide is ATP synthase subunit b 2 (Brucella abortus (strain S19)).